A 31-amino-acid polypeptide reads, in one-letter code: Photosystem II reaction center protein T (31 aa).

The helical transmembrane segment at 3–23 (ALVYVFLLVGTLMVIFFAIFF) threads the bilayer.

This sequence belongs to the PsbT family. As to quaternary structure, PSII is composed of 1 copy each of membrane proteins PsbA, PsbB, PsbC, PsbD, PsbE, PsbF, PsbH, PsbI, PsbJ, PsbK, PsbL, PsbM, PsbT, PsbX, PsbY, PsbZ, Psb30/Ycf12, at least 3 peripheral proteins of the oxygen-evolving complex and a large number of cofactors. It forms dimeric complexes.

The protein localises to the plastid. It is found in the chloroplast thylakoid membrane. In terms of biological role, found at the monomer-monomer interface of the photosystem II (PS II) dimer, plays a role in assembly and dimerization of PSII. PSII is a light-driven water plastoquinone oxidoreductase, using light energy to abstract electrons from H(2)O, generating a proton gradient subsequently used for ATP formation. The polypeptide is Photosystem II reaction center protein T (Gracilaria tenuistipitata var. liui (Red alga)).